A 550-amino-acid polypeptide reads, in one-letter code: Undecaprenyl phosphate-alpha-4-amino-4-deoxy-L-arabinose arabinosyl transferase 2 (550 aa).

A run of 11 helical transmembrane segments spans residues 4-24, 81-101, 110-132, 176-196, 204-224, 255-275, 288-308, 313-333, 348-368, 381-401, and 409-429; these read LKPG…PLSF, FAVH…VYWL, WLGL…GTYA, FMTK…PWVI, VFIY…PWVI, APFW…LGLL, TQSG…FFSL, LPTY…RYAA, LLFG…WGLA, VLLG…TLRA, and AALC…QQVI.

It belongs to the glycosyltransferase 83 family.

It is found in the cell inner membrane. The enzyme catalyses 4-amino-4-deoxy-alpha-L-arabinopyranosyl di-trans,octa-cis-undecaprenyl phosphate + lipid IVA = lipid IIA + di-trans,octa-cis-undecaprenyl phosphate.. Its pathway is lipopolysaccharide metabolism; 4-amino-4-deoxy-beta-L-arabinose-lipid A biosynthesis. Catalyzes the transfer of the L-Ara4N moiety of the glycolipid undecaprenyl phosphate-alpha-L-Ara4N to lipid A. The modified arabinose is attached to lipid A and is required for resistance to polymyxin and cationic antimicrobial peptides. This is Undecaprenyl phosphate-alpha-4-amino-4-deoxy-L-arabinose arabinosyl transferase 2 from Sodalis glossinidius (strain morsitans).